We begin with the raw amino-acid sequence, 249 residues long: tRNA (guanine-N(1)-)-methyltransferase (249 aa).

Residues Gly-113 and 133-138 contribute to the S-adenosyl-L-methionine site; that span reads VGDYVL.

It belongs to the RNA methyltransferase TrmD family. In terms of assembly, homodimer.

It is found in the cytoplasm. The catalysed reaction is guanosine(37) in tRNA + S-adenosyl-L-methionine = N(1)-methylguanosine(37) in tRNA + S-adenosyl-L-homocysteine + H(+). In terms of biological role, specifically methylates guanosine-37 in various tRNAs. The polypeptide is tRNA (guanine-N(1)-)-methyltransferase (Tolumonas auensis (strain DSM 9187 / NBRC 110442 / TA 4)).